The sequence spans 215 residues: Pyrrolidone-carboxylate peptidase (215 aa).

Residues Glu78, Cys141, and His165 contribute to the active site.

The protein belongs to the peptidase C15 family. In terms of assembly, homotetramer.

Its subcellular location is the cytoplasm. It catalyses the reaction Release of an N-terminal pyroglutamyl group from a polypeptide, the second amino acid generally not being Pro.. Removes 5-oxoproline from various penultimate amino acid residues except L-proline. In Streptococcus pyogenes serotype M1, this protein is Pyrrolidone-carboxylate peptidase (pcp).